We begin with the raw amino-acid sequence, 408 residues long: UDP-glucose 4-epimerase 2 (408 aa).

Position 13-44 (13-44 (TVLVTGGAGYIGSHAVLQLLLAGFRAVVVDNL)) interacts with NAD(+). Ser-138 lines the substrate pocket. Tyr-162 serves as the catalytic Proton acceptor. Residues 369 to 408 (GSPKQNGHCTNGFSESTRHNGHNGYGLVDSAKHNGNGHFH) are disordered. The span at 370-383 (SPKQNGHCTNGFSE) shows a compositional bias: polar residues.

Belongs to the NAD(P)-dependent epimerase/dehydratase family. It depends on NAD(+) as a cofactor.

The catalysed reaction is UDP-alpha-D-glucose = UDP-alpha-D-galactose. Its pathway is carbohydrate metabolism; galactose metabolism. Functionally, catalyzes the interconversion between UDP-glucose and UDP-galactose. The sequence is that of UDP-glucose 4-epimerase 2 (UGE-2) from Oryza sativa subsp. japonica (Rice).